A 1360-amino-acid polypeptide reads, in one-letter code: Ubiquitin carboxyl-terminal hydrolase 19 (1360 aa).

The segment at 1–46 is disordered; it reads MSAGASATGPRRGPPGLEEATSKKKQKDRANLESKDGDARRVSLPR. The Cytoplasmic segment spans residues 1-1333; the sequence is MSAGASATGP…TTPDEGCLRY (1333 aa). Basic and acidic residues predominate over residues 28–46; the sequence is DRANLESKDGDARRVSLPR. Residues 51–140 enclose the CS 1 domain; sequence KDELLLDWRQ…VPLLTWPSLL (90 aa). Positions 163-239 are disordered; it reads PIALEPGSEP…APSFLSDSAT (77 aa). The segment covering 170–181 has biased composition (basic and acidic residues); sequence SEPRRAKQEARN. A compositionally biased stretch (gly residues) spans 189–199; the sequence is GEVGSGAGPGT. Phosphoserine is present on Ser220. The 103-residue stretch at 322 to 424 folds into the CS 2 domain; it reads LAFVKNDSYE…RQSQRWGGLE (103 aa). The segment at 432–482 is disordered; sequence VGGAKVAVPTGPTPLDSTPPGGGPHPLTGQEEARAVEKEKPKARSEDSGLD. A compositionally biased stretch (basic and acidic residues) spans 462–478; that stretch reads EEARAVEKEKPKARSED. In terms of domain architecture, USP spans 539–1256; that stretch reads TGLVNLGNTC…YAYVLFYRRR (718 aa). The Nucleophile role is filled by Cys548. 8 residues coordinate Zn(2+): Cys833, Cys836, Cys850, Cys853, Cys859, Cys863, His871, and Cys875. An MYND-type zinc finger spans residues 833-875; the sequence is CAACQRKQQSEEEKLKRCTRCYRVGYCNQFCQKTHWPDHKGLC. The disordered stretch occupies residues 965-988; that stretch reads DTGAHRVWPPADRGPVPSTSGLSS. The active-site Proton acceptor is His1207. Residues 1259 to 1274 show a composition bias toward basic and acidic residues; it reads PVERPPRASHSEHHPD. The tract at residues 1259 to 1281 is disordered; the sequence is PVERPPRASHSEHHPDLGPAAEA. The helical transmembrane segment at 1334-1354 threads the bilayer; sequence FVLGTVAALVALVLNVFYPLV. The Lumenal portion of the chain corresponds to 1355 to 1360; sequence SQSRWR.

As to quaternary structure, interacts with RNF123. Interacts with BIRC2/c-IAP1, BIRC3/c-IAP2 and XIAP/BIRC4. Interacts with HIF1A (via N-terminus).

Its subcellular location is the endoplasmic reticulum membrane. The enzyme catalyses Thiol-dependent hydrolysis of ester, thioester, amide, peptide and isopeptide bonds formed by the C-terminal Gly of ubiquitin (a 76-residue protein attached to proteins as an intracellular targeting signal).. Its function is as follows. Deubiquitinating enzyme that regulates the degradation of various proteins by removing ubiquitin moieties, thereby preventing their proteasomal degradation. Stabilizes RNF123, which promotes CDKN1B degradation and contributes to cell proliferation. Decreases the levels of ubiquitinated proteins during skeletal muscle formation and acts to repress myogenesis. Modulates transcription of major myofibrillar proteins. Also involved in turnover of endoplasmic-reticulum-associated degradation (ERAD) substrates. Mechanistically, deubiquitinates and thereby stabilizes several E3 ligases involved in the ERAD pathway including SYVN1 or MARCHF6. Regulates the stability of other E3 ligases including BIRC2/c-IAP1 and BIRC3/c-IAP2 by preventing their ubiquitination. Required for cells to mount an appropriate response to hypoxia by rescuing HIF1A from degradation in a non-catalytic manner and by mediating the deubiquitination of FUNDC1. Attenuates mitochondrial damage and ferroptosis by targeting and stabilizing NADPH oxidase 4/NOX4. Negatively regulates TNF-alpha- and IL-1beta-triggered NF-kappa-B activation by hydrolyzing 'Lys-27'- and 'Lys-63'-linked polyubiquitin chains from MAP3K7. Modulates also the protein level and aggregation of polyQ-expanded huntingtin/HTT through HSP90AA1. The protein is Ubiquitin carboxyl-terminal hydrolase 19 (Usp19) of Mus musculus (Mouse).